A 427-amino-acid chain; its full sequence is 4-hydroxy-3-methylbut-2-en-1-yl diphosphate synthase (flavodoxin) (427 aa).

Positions 1 to 21 (MNKLENTIDSDIAGPAPRHRT) are disordered. 4 residues coordinate [4Fe-4S] cluster: Cys310, Cys313, Cys356, and Glu363.

This sequence belongs to the IspG family. The cofactor is [4Fe-4S] cluster.

The catalysed reaction is (2E)-4-hydroxy-3-methylbut-2-enyl diphosphate + oxidized [flavodoxin] + H2O + 2 H(+) = 2-C-methyl-D-erythritol 2,4-cyclic diphosphate + reduced [flavodoxin]. Its pathway is isoprenoid biosynthesis; isopentenyl diphosphate biosynthesis via DXP pathway; isopentenyl diphosphate from 1-deoxy-D-xylulose 5-phosphate: step 5/6. Its function is as follows. Converts 2C-methyl-D-erythritol 2,4-cyclodiphosphate (ME-2,4cPP) into 1-hydroxy-2-methyl-2-(E)-butenyl 4-diphosphate. The protein is 4-hydroxy-3-methylbut-2-en-1-yl diphosphate synthase (flavodoxin) of Bradyrhizobium diazoefficiens (strain JCM 10833 / BCRC 13528 / IAM 13628 / NBRC 14792 / USDA 110).